Here is a 382-residue protein sequence, read N- to C-terminus: Homeobox protein SHOOT MERISTEMLESS (382 aa).

The disordered stretch occupies residues Met26 to His59. Residues His44–Gly53 are compositionally biased toward basic and acidic residues. Residues Glu262 to Phe282 enclose the ELK domain. The segment at residues Met283–Ser346 is a DNA-binding region (homeobox; TALE-type).

It belongs to the TALE/KNOX homeobox family. In terms of assembly, forms homodimers. May form heterodimeric complexes with TALE/BELL proteins BEL1, BLH2, BLH3, BLH8/PNF, BLH9/PNY and ATH1. Interacts with CCT8. Binds to MBP2C; this interaction reduces RNA binding capacity. Interacts with FTIP3 and FTIP4. Expressed in all four types of shoot apical meristems (SAM) i.e. in vegetative, axillary, inflorescence and floral.

The protein localises to the nucleus. It is found in the cell junction. The protein resides in the plasmodesma. Its subcellular location is the cytoplasm. It localises to the endosome. The protein localises to the cell membrane. Its function is as follows. Required for shoot apical meristem (SAM) formation during embryogenesis. Negatively regulates ASYMMETRIC LEAVES1 (AS1) and ASYMMETRIC LEAVES2 (AS2 or LBD6). Probably binds to the DNA sequence 5'-TGAC-3'. Binds to RNA. This chain is Homeobox protein SHOOT MERISTEMLESS, found in Arabidopsis thaliana (Mouse-ear cress).